A 33-amino-acid chain; its full sequence is Large ribosomal subunit protein uL24 (33 aa).

It belongs to the universal ribosomal protein uL24 family. In terms of assembly, component of the large ribosomal subunit.

It localises to the cytoplasm. In terms of biological role, component of the large ribosomal subunit. The ribosome is a large ribonucleoprotein complex responsible for the synthesis of proteins in the cell. The sequence is that of Large ribosomal subunit protein uL24 (rpl26) from Xenopus laevis (African clawed frog).